Reading from the N-terminus, the 345-residue chain is Anthranilate phosphoribosyltransferase (345 aa).

5-phospho-alpha-D-ribose 1-diphosphate contacts are provided by residues Gly-84, 87 to 88 (GD), Thr-92, 94 to 97 (NIST), 112 to 120 (KHGNRSVSS), and Ser-124. Gly-84 provides a ligand contact to anthranilate. Ser-96 contacts Mg(2+). Residue Asn-115 coordinates anthranilate. Arg-170 lines the anthranilate pocket. Mg(2+)-binding residues include Asp-229 and Glu-230.

This sequence belongs to the anthranilate phosphoribosyltransferase family. As to quaternary structure, homodimer. Mg(2+) is required as a cofactor.

The catalysed reaction is N-(5-phospho-beta-D-ribosyl)anthranilate + diphosphate = 5-phospho-alpha-D-ribose 1-diphosphate + anthranilate. It participates in amino-acid biosynthesis; L-tryptophan biosynthesis; L-tryptophan from chorismate: step 2/5. In terms of biological role, catalyzes the transfer of the phosphoribosyl group of 5-phosphorylribose-1-pyrophosphate (PRPP) to anthranilate to yield N-(5'-phosphoribosyl)-anthranilate (PRA). In Xanthomonas euvesicatoria pv. vesicatoria (strain 85-10) (Xanthomonas campestris pv. vesicatoria), this protein is Anthranilate phosphoribosyltransferase.